Here is a 443-residue protein sequence, read N- to C-terminus: Phosphomevalonate kinase ERG8 (443 aa).

160 to 170 (ANKTGLGSSAA) serves as a coordination point for ATP.

It belongs to the GHMP kinase family. Mevalonate kinase subfamily.

It catalyses the reaction (R)-5-phosphomevalonate + ATP = (R)-5-diphosphomevalonate + ADP. It functions in the pathway isoprenoid biosynthesis; isopentenyl diphosphate biosynthesis via mevalonate pathway; isopentenyl diphosphate from (R)-mevalonate: step 2/3. In terms of biological role, phosphomevalonate kinase; part of the second module of ergosterol biosynthesis pathway that includes the middle steps of the pathway. ERG8 converts 5-phosphomevalonate to 5-diphosphomevalonate. The second module is carried out in the vacuole and involves the formation of farnesyl diphosphate, which is also an important intermediate in the biosynthesis of ubiquinone, dolichol, heme and prenylated proteins. Activity by the mevalonate kinase ERG12 (FG05912) first converts mevalonate into 5-phosphomevalonate. 5-phosphomevalonate is then further converted to 5-diphosphomevalonate by the phosphomevalonate kinase ERG8 (FG09764). The diphosphomevalonate decarboxylase ERG19 (FG10424) then produces isopentenyl diphosphate. The isopentenyl-diphosphate delta-isomerase IDI1 (FG09722) then catalyzes the 1,3-allylic rearrangement of the homoallylic substrate isopentenyl (IPP) to its highly electrophilic allylic isomer, dimethylallyl diphosphate (DMAPP). Finally the farnesyl diphosphate synthase ERG20 (FG06784) catalyzes the sequential condensation of isopentenyl pyrophosphate with dimethylallyl pyrophosphate, and then with the resultant geranylpyrophosphate to the ultimate product farnesyl pyrophosphate. The protein is Phosphomevalonate kinase ERG8 of Gibberella zeae (strain ATCC MYA-4620 / CBS 123657 / FGSC 9075 / NRRL 31084 / PH-1) (Wheat head blight fungus).